The sequence spans 278 residues: Phosphatidylglycerol--prolipoprotein diacylglyceryl transferase (278 aa).

3 helical membrane-spanning segments follow: residues 21 to 41, 54 to 74, and 88 to 108; these read WYGI…QASV, IIFW…VIFQ, and IWQG…TGII. Arg-136 serves as a coordination point for a 1,2-diacyl-sn-glycero-3-phospho-(1'-sn-glycerol). 3 helical membrane passes run 176–196, 202–222, and 234–254; these read QPTF…LILL, IGDT…FVEG, and IRIA…IMIV.

Belongs to the Lgt family.

Its subcellular location is the cell membrane. The catalysed reaction is L-cysteinyl-[prolipoprotein] + a 1,2-diacyl-sn-glycero-3-phospho-(1'-sn-glycerol) = an S-1,2-diacyl-sn-glyceryl-L-cysteinyl-[prolipoprotein] + sn-glycerol 1-phosphate + H(+). It participates in protein modification; lipoprotein biosynthesis (diacylglyceryl transfer). Its function is as follows. Catalyzes the transfer of the diacylglyceryl group from phosphatidylglycerol to the sulfhydryl group of the N-terminal cysteine of a prolipoprotein, the first step in the formation of mature lipoproteins. This Staphylococcus saprophyticus subsp. saprophyticus (strain ATCC 15305 / DSM 20229 / NCIMB 8711 / NCTC 7292 / S-41) protein is Phosphatidylglycerol--prolipoprotein diacylglyceryl transferase.